Here is a 535-residue protein sequence, read N- to C-terminus: CTP synthase (535 aa).

The amidoligase domain stretch occupies residues Met1–Leu267. Ser13 contributes to the CTP binding site. Position 13 (Ser13) interacts with UTP. Ser14 to Ile19 contacts ATP. Residue Tyr54 participates in L-glutamine binding. An ATP-binding site is contributed by Asp71. Mg(2+) is bound by residues Asp71 and Glu141. CTP-binding positions include Asp148 to Glu150, Lys188 to Gln193, and Lys224. Residues Lys188 to Gln193 and Lys224 contribute to the UTP site. The Glutamine amidotransferase type-1 domain maps to Thr292–Gln534. Gly354 is a binding site for L-glutamine. Cys381 acts as the Nucleophile; for glutamine hydrolysis in catalysis. Residues Leu382–Gln385, Glu405, and Arg462 contribute to the L-glutamine site. Catalysis depends on residues His507 and Glu509.

It belongs to the CTP synthase family. As to quaternary structure, homotetramer.

It carries out the reaction UTP + L-glutamine + ATP + H2O = CTP + L-glutamate + ADP + phosphate + 2 H(+). The enzyme catalyses L-glutamine + H2O = L-glutamate + NH4(+). It catalyses the reaction UTP + NH4(+) + ATP = CTP + ADP + phosphate + 2 H(+). It functions in the pathway pyrimidine metabolism; CTP biosynthesis via de novo pathway; CTP from UDP: step 2/2. Its activity is regulated as follows. Allosterically activated by GTP, when glutamine is the substrate; GTP has no effect on the reaction when ammonia is the substrate. The allosteric effector GTP functions by stabilizing the protein conformation that binds the tetrahedral intermediate(s) formed during glutamine hydrolysis. Inhibited by the product CTP, via allosteric rather than competitive inhibition. Its function is as follows. Catalyzes the ATP-dependent amination of UTP to CTP with either L-glutamine or ammonia as the source of nitrogen. Regulates intracellular CTP levels through interactions with the four ribonucleotide triphosphates. This is CTP synthase from Bacillus velezensis (strain DSM 23117 / BGSC 10A6 / LMG 26770 / FZB42) (Bacillus amyloliquefaciens subsp. plantarum).